Consider the following 345-residue polypeptide: Tropomodulin-4 (345 aa).

Positions 42–63 are disordered; that stretch reads NMLLPAGLRQRDQTKKSPTGPL.

It belongs to the tropomodulin family. As to quaternary structure, binds to the N-terminus of tropomyosin and to actin. In terms of tissue distribution, highly expressed in skeletal muscle.

The protein localises to the cytoplasm. It is found in the cytoskeleton. Its function is as follows. Blocks the elongation and depolymerization of the actin filaments at the pointed end. The Tmod/TM complex contributes to the formation of the short actin protofilament, which in turn defines the geometry of the membrane skeleton. This is Tropomodulin-4 (TMOD4) from Homo sapiens (Human).